The sequence spans 188 residues: Peptidyl-tRNA hydrolase (188 aa).

TRNA is bound at residue tyrosine 14. Histidine 19 serves as the catalytic Proton acceptor. TRNA contacts are provided by tyrosine 64, asparagine 66, and asparagine 113.

It belongs to the PTH family. As to quaternary structure, monomer.

The protein localises to the cytoplasm. The enzyme catalyses an N-acyl-L-alpha-aminoacyl-tRNA + H2O = an N-acyl-L-amino acid + a tRNA + H(+). Functionally, hydrolyzes ribosome-free peptidyl-tRNAs (with 1 or more amino acids incorporated), which drop off the ribosome during protein synthesis, or as a result of ribosome stalling. In terms of biological role, catalyzes the release of premature peptidyl moieties from peptidyl-tRNA molecules trapped in stalled 50S ribosomal subunits, and thus maintains levels of free tRNAs and 50S ribosomes. This Chloroflexus aurantiacus (strain ATCC 29364 / DSM 637 / Y-400-fl) protein is Peptidyl-tRNA hydrolase.